Consider the following 493-residue polypeptide: Probable cytosol aminopeptidase (493 aa).

Mn(2+)-binding residues include Lys-258 and Asp-263. Residue Lys-270 is part of the active site. The Mn(2+) site is built by Asp-281, Asp-340, and Glu-342. Arg-344 is an active-site residue.

Belongs to the peptidase M17 family. It depends on Mn(2+) as a cofactor.

The protein localises to the cytoplasm. It carries out the reaction Release of an N-terminal amino acid, Xaa-|-Yaa-, in which Xaa is preferably Leu, but may be other amino acids including Pro although not Arg or Lys, and Yaa may be Pro. Amino acid amides and methyl esters are also readily hydrolyzed, but rates on arylamides are exceedingly low.. It catalyses the reaction Release of an N-terminal amino acid, preferentially leucine, but not glutamic or aspartic acids.. Its function is as follows. Presumably involved in the processing and regular turnover of intracellular proteins. Catalyzes the removal of unsubstituted N-terminal amino acids from various peptides. In Caulobacter vibrioides (strain ATCC 19089 / CIP 103742 / CB 15) (Caulobacter crescentus), this protein is Probable cytosol aminopeptidase.